A 313-amino-acid polypeptide reads, in one-letter code: Porphobilinogen deaminase (313 aa).

Position 242 is an S-(dipyrrolylmethanemethyl)cysteine (C242).

The protein belongs to the HMBS family. In terms of assembly, monomer. Requires dipyrromethane as cofactor.

It carries out the reaction 4 porphobilinogen + H2O = hydroxymethylbilane + 4 NH4(+). It participates in porphyrin-containing compound metabolism; protoporphyrin-IX biosynthesis; coproporphyrinogen-III from 5-aminolevulinate: step 2/4. Functionally, tetrapolymerization of the monopyrrole PBG into the hydroxymethylbilane pre-uroporphyrinogen in several discrete steps. In Klebsiella pneumoniae (strain 342), this protein is Porphobilinogen deaminase.